A 144-amino-acid chain; its full sequence is Large ribosomal subunit protein uL16 (144 aa).

Positions 1–16 (MLQPKKTKFRRQQKGR) are enriched in basic residues. The segment at 1 to 22 (MLQPKKTKFRRQQKGRMKGEAQ) is disordered.

This sequence belongs to the universal ribosomal protein uL16 family. Part of the 50S ribosomal subunit.

Binds 23S rRNA and is also seen to make contacts with the A and possibly P site tRNAs. This Parabacteroides distasonis (strain ATCC 8503 / DSM 20701 / CIP 104284 / JCM 5825 / NCTC 11152) protein is Large ribosomal subunit protein uL16.